We begin with the raw amino-acid sequence, 169 residues long: Histone H1.9 (169 aa).

Polar residues-rich tracts occupy residues 1–10 and 19–36; these read MSLVSPSPDS and DAST…IGPN. The tract at residues 1 to 36 is disordered; that stretch reads MSLVSPSPDSNAVMAGDQDASTSQVPSQSESKIGPN. The H15 domain occupies 43-116; the sequence is RKPTMSKVIL…GASGSFRLGK (74 aa). Ser62 and Ser65 each carry phosphoserine. Residues 118-142 are compositionally biased toward basic residues; the sequence is QAFKSKCKAKRRQRRQKPGQRRTGS. The interval 118–154 is disordered; sequence QAFKSKCKAKRRQRRQKPGQRRTGSRRSLLGSKKSNN.

Belongs to the histone H1/H5 family.

The protein localises to the nucleus. It localises to the chromosome. Its function is as follows. DNA-binding protein that may be implicated in chromatin remodeling and/or transcriptional regulation during spermiogenesis, the process of spermatid maturation into spermatozoa. The protein is Histone H1.9 of Rattus norvegicus (Rat).